A 122-amino-acid chain; its full sequence is Large ribosomal subunit protein uL14 (122 aa).

Belongs to the universal ribosomal protein uL14 family. In terms of assembly, part of the 50S ribosomal subunit. Forms a cluster with proteins L3 and L19. In the 70S ribosome, L14 and L19 interact and together make contacts with the 16S rRNA in bridges B5 and B8.

In terms of biological role, binds to 23S rRNA. Forms part of two intersubunit bridges in the 70S ribosome. The polypeptide is Large ribosomal subunit protein uL14 (Endomicrobium trichonymphae).